Reading from the N-terminus, the 841-residue chain is Alpha-glucan phosphorylase 2, cytosolic (841 aa).

A disordered region spans residues Met-1–Ala-24. Lys-687 carries the post-translational modification N6-(pyridoxal phosphate)lysine.

The protein belongs to the glycogen phosphorylase family. The cofactor is pyridoxal 5'-phosphate.

It is found in the cytoplasm. The enzyme catalyses [(1-&gt;4)-alpha-D-glucosyl](n) + phosphate = [(1-&gt;4)-alpha-D-glucosyl](n-1) + alpha-D-glucose 1-phosphate. Phosphorylase is an important allosteric enzyme in carbohydrate metabolism. Enzymes from different sources differ in their regulatory mechanisms and in their natural substrates. However, all known phosphorylases share catalytic and structural properties. In Arabidopsis thaliana (Mouse-ear cress), this protein is Alpha-glucan phosphorylase 2, cytosolic (PHS2).